The sequence spans 957 residues: Glycine dehydrogenase (decarboxylating) (957 aa).

N6-(pyridoxal phosphate)lysine is present on Lys-708.

Belongs to the GcvP family. In terms of assembly, the glycine cleavage system is composed of four proteins: P, T, L and H. The cofactor is pyridoxal 5'-phosphate.

The enzyme catalyses N(6)-[(R)-lipoyl]-L-lysyl-[glycine-cleavage complex H protein] + glycine + H(+) = N(6)-[(R)-S(8)-aminomethyldihydrolipoyl]-L-lysyl-[glycine-cleavage complex H protein] + CO2. The glycine cleavage system catalyzes the degradation of glycine. The P protein binds the alpha-amino group of glycine through its pyridoxal phosphate cofactor; CO(2) is released and the remaining methylamine moiety is then transferred to the lipoamide cofactor of the H protein. This is Glycine dehydrogenase (decarboxylating) from Enterobacter sp. (strain 638).